Here is a 600-residue protein sequence, read N- to C-terminus: Aspartate--tRNA(Asp/Asn) ligase (600 aa).

Position 174 (E174) interacts with L-aspartate. The interval 198–201 (QLFK) is aspartate. An L-aspartate-binding site is contributed by R220. ATP-binding positions include 220–222 (RDE) and Q229. H457 is a binding site for L-aspartate. E491 contributes to the ATP binding site. R498 lines the L-aspartate pocket. Residue 543 to 546 (GLDR) participates in ATP binding.

Belongs to the class-II aminoacyl-tRNA synthetase family. Type 1 subfamily. Homodimer.

The protein resides in the cytoplasm. The enzyme catalyses tRNA(Asx) + L-aspartate + ATP = L-aspartyl-tRNA(Asx) + AMP + diphosphate. Functionally, aspartyl-tRNA synthetase with relaxed tRNA specificity since it is able to aspartylate not only its cognate tRNA(Asp) but also tRNA(Asn). Reaction proceeds in two steps: L-aspartate is first activated by ATP to form Asp-AMP and then transferred to the acceptor end of tRNA(Asp/Asn). This chain is Aspartate--tRNA(Asp/Asn) ligase, found in Burkholderia ambifaria (strain ATCC BAA-244 / DSM 16087 / CCUG 44356 / LMG 19182 / AMMD) (Burkholderia cepacia (strain AMMD)).